We begin with the raw amino-acid sequence, 658 residues long: Heat shock 70 kDa protein, mitochondrial (658 aa).

The interval 629-658 (KLDSSASKSSSTENKENKDNTTEAEFTEKK) is disordered. Residues 631 to 640 (DSSASKSSST) are compositionally biased toward low complexity. Residues 641 to 658 (ENKENKDNTTEAEFTEKK) show a composition bias toward basic and acidic residues.

This sequence belongs to the heat shock protein 70 family.

The protein localises to the mitochondrion. Functionally, may function in protein folding and assembly, and disassembly of protein complexes. The protein is Heat shock 70 kDa protein, mitochondrial (mhsp70) of Dictyostelium discoideum (Social amoeba).